Here is a 48-residue protein sequence, read N- to C-terminus: Probable antitoxin PhoAT (48 aa).

Belongs to the PhoAT antitoxin family. Interacts with toxin PhoH2.

In terms of biological role, probable antitoxin component of a type II toxin-antitoxin (TA) system. The probable cognate antitoxin is PhoAT; the toxin gene can be expressed in the absence of the antitoxin gene in M.smegmatis strain mc(2)155. This is Probable antitoxin PhoAT from Mycolicibacterium smegmatis (strain ATCC 700084 / mc(2)155) (Mycobacterium smegmatis).